A 356-amino-acid polypeptide reads, in one-letter code: Geranylgeranyl pyrophosphate synthase penG (356 aa).

Residues Lys-83, Arg-86, and His-115 each contribute to the isopentenyl diphosphate site. Asp-122 and Asp-126 together coordinate Mg(2+). Arg-131 contacts dimethylallyl diphosphate. Arg-132 provides a ligand contact to isopentenyl diphosphate. Residues Lys-209, Thr-210, and Gln-243 each contribute to the dimethylallyl diphosphate site. Asp-246 is a Mg(2+) binding site. Dimethylallyl diphosphate-binding residues include Asn-250, Lys-260, and Lys-270.

The protein belongs to the FPP/GGPP synthase family. Requires Mg(2+) as cofactor.

The catalysed reaction is isopentenyl diphosphate + dimethylallyl diphosphate = (2E)-geranyl diphosphate + diphosphate. It catalyses the reaction isopentenyl diphosphate + (2E)-geranyl diphosphate = (2E,6E)-farnesyl diphosphate + diphosphate. It carries out the reaction isopentenyl diphosphate + (2E,6E)-farnesyl diphosphate = (2E,6E,10E)-geranylgeranyl diphosphate + diphosphate. The protein operates within secondary metabolite biosynthesis. Functionally, geranylgeranyl pyrophosphate synthase; part of the gene cluster that mediates the biosynthesis of the indole diterpenes penitrems. The geranylgeranyl diphosphate (GGPP) synthase ptmG catalyzes the first step in penitrem biosynthesis via conversion of farnesyl pyrophosphate and isopentyl pyrophosphate into geranylgeranyl pyrophosphate (GGPP). Condensation of indole-3-glycerol phosphate with GGPP by the prenyl transferase ptmC then forms 3-geranylgeranylindole (3-GGI). Epoxidation by the FAD-dependent monooxygenase ptmM leads to a epoxidized-GGI that is substrate of the terpene cyclase ptmB for cyclization to yield paspaline. Paspaline is subsequently converted to 13-desoxypaxilline by the cytochrome P450 monooxygenase ptmP, the latter being then converted to paxilline by the cytochrome P450 monooxygenase ptmQ. Paxilline is converted to beta-paxitriol via C-10 ketoreduction by the short-chain dehydrogenase ptmH which can be monoprenylated at the C-20 by the indole diterpene prenyltransferase ptmD. A two-step elimination (acetylation and elimination) process performed by the O-acetyltransferase ptmV and ptmI leads to the production of the prenylated form of penijanthine. The FAD-linked oxidoreductase ptmO then converts the prenylated form of penijanthine into PC-M5 which is in turn transformed into PC-M4 by the aromatic dimethylallyltransferase ptmE. Five sequential oxidative transformations performed by the cytochrome P450 monooxygenases ptmK, ptmU, ptmL, ptmN and ptmJ yield the various penitrem compounds. PtmK, ptmU and ptmM are involved in the formation of the key bicyclic ring of penitrem C via the formation of the intermediates secopenitrem D and penitrem D. PtmL catalyzes the epoxidation of penitrem D and C to yield penitrem B and F, respectively. PtmJ catalyzes the last benzylic hydroxylation to convert penitrem B to prenitrem E and penitrem F to penitrem A. This chain is Geranylgeranyl pyrophosphate synthase penG, found in Penicillium ochrochloron.